The primary structure comprises 271 residues: Bis(5'-nucleosyl)-tetraphosphatase, symmetrical (271 aa).

Belongs to the Ap4A hydrolase family.

The enzyme catalyses P(1),P(4)-bis(5'-adenosyl) tetraphosphate + H2O = 2 ADP + 2 H(+). Hydrolyzes diadenosine 5',5'''-P1,P4-tetraphosphate to yield ADP. This Aliivibrio fischeri (strain MJ11) (Vibrio fischeri) protein is Bis(5'-nucleosyl)-tetraphosphatase, symmetrical.